The following is a 137-amino-acid chain: Putative pre-16S rRNA nuclease (137 aa).

Belongs to the YqgF nuclease family.

The protein resides in the cytoplasm. Its function is as follows. Could be a nuclease involved in processing of the 5'-end of pre-16S rRNA. The protein is Putative pre-16S rRNA nuclease of Anaeromyxobacter dehalogenans (strain 2CP-1 / ATCC BAA-258).